Consider the following 386-residue polypeptide: MSALEKSMHLGRLPSRPPLPGSGGSQSGAKMRMGPGRKRDFSPVPWSQYFESMEDVEVENETGKDTFRVYKSGSEGPVLLLLHGGGHSALSWAVFTAAIISRVQCRIVALDLRSHGETKVKNPEDLSAETMAKDVGNVVEAMYGDLPPPIMLIGHSMGGAIAVHTASSNLVPSLLGLCMIGVVEGTAMDALNSMQNFLRGRPKTFKSLENAIEWSVKSGQIRNLESARVSMVGQVKQCEGITSPEGSKSIVEGIIEEEEEDEEGSESISKRKKEDDMETKKDHPYTWRIELAKTEKYWDGWFRGLSNLFLSCPIPKLLLLAGVDRLDKDLTIGQMQGKFQMQVLPQCGHAVHEDAPDKVAEAVATFLIRHRFAEPIGGFQCVFPGC.

A disordered region spans residues 1–38 (MSALEKSMHLGRLPSRPPLPGSGGSQSGAKMRMGPGRK). Ser15 is modified (phosphoserine). At Arg16 the chain carries Asymmetric dimethylarginine; alternate. The residue at position 16 (Arg16) is an Omega-N-methylarginine; alternate. Residue Ser42 is modified to Phosphoserine. Residue Ser156 is part of the active site. Positions 254–265 (IIEEEEEDEEGS) are enriched in acidic residues. The interval 254-280 (IIEEEEEDEEGSESISKRKKEDDMETK) is disordered. Positions 268-280 (ISKRKKEDDMETK) are enriched in basic and acidic residues. Residue His349 is part of the active site.

This sequence belongs to the AB hydrolase superfamily. As to quaternary structure, binds PPP2CA and PPP2CB. Post-translationally, phosphorylated by SIK1 following increases in intracellular sodium, leading to dissociation from the protein phosphatase 2A (PP2A) complex and subsequent dephosphorylation of sodium/potassium-transporting ATPase ATP1A1.

It catalyses the reaction [phosphatase 2A protein]-C-terminal L-leucine methyl ester + H2O = [phosphatase 2A protein]-C-terminal L-leucine + methanol + H(+). Its function is as follows. Demethylates proteins that have been reversibly carboxymethylated. Demethylates PPP2CB (in vitro) and PPP2CA. Binding to PPP2CA displaces the manganese ion and inactivates the enzyme. In Pongo abelii (Sumatran orangutan), this protein is Protein phosphatase methylesterase 1 (PPME1).